A 639-amino-acid polypeptide reads, in one-letter code: 3-oxocholoyl-CoA 4-desaturase (639 aa).

Q101 provides a ligand contact to FMN. Substrate is bound at residue 155-158 (HAAH). Y160 serves as the catalytic Proton donor. Residues R208, R286, and 308-309 (GR) contribute to the FMN site. [4Fe-4S] cluster is bound by residues C332 and C335. Residue Q337 coordinates FAD. [4Fe-4S] cluster contacts are provided by C339 and C353. 5 residues coordinate FAD: A383, E402, Q410, K420, and V447.

In the N-terminal section; belongs to the NADH:flavin oxidoreductase/NADH oxidase family. It depends on FMN as a cofactor. FAD serves as cofactor. [4Fe-4S] cluster is required as a cofactor.

The catalysed reaction is 7alpha,12alpha-dihydroxy-3-oxochol-24-oyl-CoA + NAD(+) = 7alpha,12alpha-dihydroxy-3-oxochol-4-en-24-oyl-CoA + NADH + H(+). The enzyme catalyses 7alpha-hydroxy-3-oxochol-24-oyl-CoA + NAD(+) = 7alpha-hydroxy-3-oxochol-4-en-24-oyl-CoA + NADH + H(+). It participates in lipid metabolism; bile acid degradation. Functionally, stereo-specific NAD(H)-dependent 3-oxo-delta4-cholenoic acid oxidoreductase involved in bile acid 7alpha-dehydroxylation. This Clostridium scindens (strain JCM 10418 / VPI 12708) protein is 3-oxocholoyl-CoA 4-desaturase.